The following is a 502-amino-acid chain: Zinc finger protein 3 homolog (502 aa).

2 stretches are compositionally biased toward basic and acidic residues: residues 1 to 13 (MGTENKEVIPKEE) and 80 to 93 (PSSEKDRENNESER). 2 disordered regions span residues 1–26 (MGTENKEVIPKEEISEESEPHGSLLE) and 47–103 (LEGH…NLVT). Glycyl lysine isopeptide (Lys-Gly) (interchain with G-Cter in SUMO2) cross-links involve residues K6 and K11. C2H2-type zinc fingers lie at residues 141 to 163 (HTCKECGKAFNQNSHLIQHMRVH), 169 to 191 (FECKECGKTFGTNSSLRRHLRIH), 197 to 219 (FACNECGKAFIQSSHLIHHHRIH), 225 to 247 (YKCEECGKAFSQNSALILHQRIH), 253 to 275 (YECNECGKTFRVSSQLIQHQRIH), 281 to 303 (HECNECGKAFKHSSGLIRHQKIH), 309 to 331 (YLCNECGKGFGQSSELIRHQRIH), 337 to 359 (YECNECGKTFGQNSEIIRHIRIH), 365 to 387 (YVCKECGKAFRGNSELLRHERIH), 393 to 415 (YECFECGKAFRRTSHLIVHQRIH), 421 to 443 (HQCNECARTFWDNSELLLHQKIH), 449 to 471 (YECSECEKTFSQHSQLIIHQRIH), and 477 to 499 (YECQECQKTFSRSSHLLRHQSVH).

It belongs to the krueppel C2H2-type zinc-finger protein family.

The protein resides in the nucleus. May be involved in transcriptional regulation. The chain is Zinc finger protein 3 homolog (ZFP3) from Homo sapiens (Human).